Here is a 341-residue protein sequence, read N- to C-terminus: Methionine import ATP-binding protein MetN 2 (341 aa).

The 240-residue stretch at 2–241 (IELKEVVKEY…PQHTVTKRFV (240 aa)) folds into the ABC transporter domain. 38–45 (GFSGAGKS) is a binding site for ATP.

The protein belongs to the ABC transporter superfamily. Methionine importer (TC 3.A.1.24) family. The complex is composed of two ATP-binding proteins (MetN), two transmembrane proteins (MetI) and a solute-binding protein (MetQ).

It is found in the cell membrane. The enzyme catalyses L-methionine(out) + ATP + H2O = L-methionine(in) + ADP + phosphate + H(+). It carries out the reaction D-methionine(out) + ATP + H2O = D-methionine(in) + ADP + phosphate + H(+). Functionally, part of the ABC transporter complex MetNIQ involved in methionine import. Responsible for energy coupling to the transport system. The sequence is that of Methionine import ATP-binding protein MetN 2 from Staphylococcus aureus (strain N315).